The sequence spans 428 residues: Palmitoyltransferase pfa4 (428 aa).

Residues 1–10 (MLCRSFNISQ) are Cytoplasmic-facing. A helical membrane pass occupies residues 11 to 31 (LAIPFVSVLISFLAYTSQLFF). Residues 32-43 (YYFEEAPLRSEE) lie on the Lumenal side of the membrane. The helical transmembrane segment at 44-61 (FWRLNIFAVCIWVCYYRA) threads the bilayer. Residues 62–134 (CTVDPGRIPK…SNCVSHFTYP (73 aa)) lie on the Cytoplasmic side of the membrane. The 51-residue stretch at 91–141 (RWCRRCEAFKPPRAHHCKTCQRCIPKMDHHCPWTSNCVSHFTYPHFMRFLF) folds into the DHHC domain. Residue Cys121 is the S-palmitoyl cysteine intermediate of the active site. A helical membrane pass occupies residues 135–155 (HFMRFLFYAVVGMGYLETLLF). Residues 156–177 (ERASIVWASRHLPSYLGPGLGQ) are Lumenal-facing. Residues 178–198 (LVHLFILLVVNSLTWLALFIL) form a helical membrane-spanning segment. At 199 to 428 (LLRSIWSLAL…GILMQRRRQQ (230 aa)) the chain is on the cytoplasmic side. The segment at 339–400 (QRSNDASHSG…WKNSEGDRLR (62 aa)) is disordered. Residues 360–373 (DRFNENKAKERLSE) show a composition bias toward basic and acidic residues. Residues 374 to 388 (SESDFSDDEEVQDGE) show a composition bias toward acidic residues. Residues 389–400 (EGWKNSEGDRLR) show a composition bias toward basic and acidic residues.

Belongs to the DHHC palmitoyltransferase family. PFA4 subfamily.

Its subcellular location is the endoplasmic reticulum membrane. It catalyses the reaction L-cysteinyl-[protein] + hexadecanoyl-CoA = S-hexadecanoyl-L-cysteinyl-[protein] + CoA. Functionally, mediates the reversible addition of palmitate to target proteins, thereby regulating their membrane association and biological function. The polypeptide is Palmitoyltransferase pfa4 (Aspergillus fumigatus (strain ATCC MYA-4609 / CBS 101355 / FGSC A1100 / Af293) (Neosartorya fumigata)).